The following is a 468-amino-acid chain: Tubulin gamma chain (468 aa).

142–148 (AGGTGSG) contacts GTP.

Belongs to the tubulin family.

It localises to the cytoplasm. The protein resides in the cytoskeleton. The protein localises to the microtubule organizing center. In terms of biological role, tubulin is the major constituent of microtubules. The gamma chain is found at microtubule organizing centers (MTOC) such as the spindle poles, suggesting that it is involved in the minus-end nucleation of microtubule assembly. This is Tubulin gamma chain (TUBG) from Chlamydomonas reinhardtii (Chlamydomonas smithii).